Here is a 565-residue protein sequence, read N- to C-terminus: METTTKKARSLYIPYAGPVLLEFPLLNKGSAFSVEERRNFNLSGLLPEVVESIEEQAERAWLQYQGFKTEIDKHIYLRNIQDTNETLFYRLVQNHLEEMMPVIYTPTVGAACERFSEIYRRARGVFISYPNRHNMDDILQNVPNHNIKVIVVTDGERILGLGDQGIGGMGIPIGKLSLYTACGGISPAYTLPVVLDVGTNNQQLLNDPLYMGWRHPRITDNEYYAFVDEFIQAVKQRWPDILLQFEDFAQKNAMPLLTRYRDEICSFNDDIQGTAAVTVGTLIAASRAAGSQLSEQKIVFLGAGSAGCGIAEQIIAQTQREGLSEDAARQNVFMVDRFGLLTDRMPNLLPFQAKLVQKCDNLQHWDTENDVLSLLDVVRNVKPDILIGVSGQTGLFTEEIIREMHKHCPRPIVMPLSNPTSRVEATPQDIIAWTEGNALVATGSPFSPVIWKDKVYPIAQCNNAYIFPGIGLGVIASGASRITDEMLMSASETLAKHSPLVNNGEGLVLPALKDIQVVSRAIAFAVGKMAQQQGVAVKTSAEALQQAIDDNFWKPEYRDYRRTSI.

The active-site Proton donor is tyrosine 104. Arginine 157 is an NAD(+) binding site. Catalysis depends on lysine 175, which acts as the Proton acceptor. A divalent metal cation is bound by residues glutamate 246, aspartate 247, and aspartate 270. Residues aspartate 270 and asparagine 418 each contribute to the NAD(+) site.

This sequence belongs to the malic enzymes family. Homotetramer. Mg(2+) is required as a cofactor. Mn(2+) serves as cofactor.

It catalyses the reaction (S)-malate + NAD(+) = pyruvate + CO2 + NADH. The enzyme catalyses oxaloacetate + H(+) = pyruvate + CO2. The protein is NAD-dependent malic enzyme of Salmonella agona (strain SL483).